The chain runs to 195 residues: dTTP/UTP pyrophosphatase (195 aa).

Residue aspartate 70 is the Proton acceptor of the active site.

It belongs to the Maf family. YhdE subfamily. Requires a divalent metal cation as cofactor.

It localises to the cytoplasm. The catalysed reaction is dTTP + H2O = dTMP + diphosphate + H(+). It catalyses the reaction UTP + H2O = UMP + diphosphate + H(+). Its function is as follows. Nucleoside triphosphate pyrophosphatase that hydrolyzes dTTP and UTP. May have a dual role in cell division arrest and in preventing the incorporation of modified nucleotides into cellular nucleic acids. The polypeptide is dTTP/UTP pyrophosphatase (Methanococcoides burtonii (strain DSM 6242 / NBRC 107633 / OCM 468 / ACE-M)).